A 381-amino-acid polypeptide reads, in one-letter code: 3-dehydroquinate synthase (381 aa).

NAD(+) contacts are provided by residues 81–86 (EGESSK), 115–119 (GVIGD), 139–140 (TS), Lys152, and Lys161. Zn(2+) is bound by residues Glu194, His256, and His274.

The protein belongs to the sugar phosphate cyclases superfamily. Dehydroquinate synthase family. The cofactor is Co(2+). It depends on Zn(2+) as a cofactor. Requires NAD(+) as cofactor.

Its subcellular location is the cytoplasm. It catalyses the reaction 7-phospho-2-dehydro-3-deoxy-D-arabino-heptonate = 3-dehydroquinate + phosphate. It functions in the pathway metabolic intermediate biosynthesis; chorismate biosynthesis; chorismate from D-erythrose 4-phosphate and phosphoenolpyruvate: step 2/7. Its function is as follows. Catalyzes the conversion of 3-deoxy-D-arabino-heptulosonate 7-phosphate (DAHP) to dehydroquinate (DHQ). This Rhodopseudomonas palustris (strain TIE-1) protein is 3-dehydroquinate synthase.